The sequence spans 101 residues: Putative pterin-4-alpha-carbinolamine dehydratase (101 aa).

This sequence belongs to the pterin-4-alpha-carbinolamine dehydratase family.

It catalyses the reaction (4aS,6R)-4a-hydroxy-L-erythro-5,6,7,8-tetrahydrobiopterin = (6R)-L-erythro-6,7-dihydrobiopterin + H2O. In Rhizobium johnstonii (strain DSM 114642 / LMG 32736 / 3841) (Rhizobium leguminosarum bv. viciae), this protein is Putative pterin-4-alpha-carbinolamine dehydratase.